The sequence spans 450 residues: Asparagine--tRNA ligase (450 aa).

It belongs to the class-II aminoacyl-tRNA synthetase family. In terms of assembly, homodimer.

The protein localises to the cytoplasm. It carries out the reaction tRNA(Asn) + L-asparagine + ATP = L-asparaginyl-tRNA(Asn) + AMP + diphosphate + H(+). The chain is Asparagine--tRNA ligase from Mycoplasmopsis pulmonis (strain UAB CTIP) (Mycoplasma pulmonis).